The chain runs to 217 residues: Cytidylate kinase (217 aa).

10-18 (GPAGAGKST) provides a ligand contact to ATP.

It belongs to the cytidylate kinase family. Type 1 subfamily.

The protein localises to the cytoplasm. The enzyme catalyses CMP + ATP = CDP + ADP. The catalysed reaction is dCMP + ATP = dCDP + ADP. This chain is Cytidylate kinase, found in Clostridium botulinum (strain Okra / Type B1).